The following is a 473-amino-acid chain: Photosystem II CP43 reaction center protein (473 aa).

Residues 1–14 (MKILYSLRRFYHVE) constitute a propeptide that is removed on maturation. Threonine 15 bears the N-acetylthreonine mark. The residue at position 15 (threonine 15) is a Phosphothreonine. The next 5 membrane-spanning stretches (helical) occupy residues 69 to 93 (LFEVAHFVPEKPMYEQGLILLPHLA), 134 to 155 (LLGPETLEESFPFFGYVWKDRN), 178 to 200 (KALYFGGVYDTWAPGGGDVRKIT), 255 to 275 (KPFAWARRAFVWSGEAYLSYS), and 291 to 312 (WFNNTAYPSEFYGPTGPEASQA). Glutamate 367 serves as a coordination point for [CaMn4O5] cluster. Residues 447 to 471 (RARAAAAGFEKGIDRDLEPVLYMNP) traverse the membrane as a helical segment.

This sequence belongs to the PsbB/PsbC family. PsbC subfamily. In terms of assembly, PSII is composed of 1 copy each of membrane proteins PsbA, PsbB, PsbC, PsbD, PsbE, PsbF, PsbH, PsbI, PsbJ, PsbK, PsbL, PsbM, PsbT, PsbX, PsbY, PsbZ, Psb30/Ycf12, at least 3 peripheral proteins of the oxygen-evolving complex and a large number of cofactors. It forms dimeric complexes. Binds multiple chlorophylls and provides some of the ligands for the Ca-4Mn-5O cluster of the oxygen-evolving complex. It may also provide a ligand for a Cl- that is required for oxygen evolution. PSII binds additional chlorophylls, carotenoids and specific lipids. serves as cofactor.

It localises to the plastid. The protein localises to the chloroplast thylakoid membrane. Functionally, one of the components of the core complex of photosystem II (PSII). It binds chlorophyll and helps catalyze the primary light-induced photochemical processes of PSII. PSII is a light-driven water:plastoquinone oxidoreductase, using light energy to abstract electrons from H(2)O, generating O(2) and a proton gradient subsequently used for ATP formation. The polypeptide is Photosystem II CP43 reaction center protein (Brachypodium distachyon (Purple false brome)).